The chain runs to 432 residues: Enolase (432 aa).

A (2R)-2-phosphoglycerate-binding site is contributed by Gln-167. Glu-209 acts as the Proton donor in catalysis. Mg(2+) is bound by residues Asp-246, Glu-290, and Asp-317. Positions 342, 371, 372, and 393 each coordinate (2R)-2-phosphoglycerate. Lys-342 serves as the catalytic Proton acceptor.

Belongs to the enolase family. Component of the RNA degradosome, a multiprotein complex involved in RNA processing and mRNA degradation. Mg(2+) is required as a cofactor.

The protein localises to the cytoplasm. It is found in the secreted. It localises to the cell surface. It catalyses the reaction (2R)-2-phosphoglycerate = phosphoenolpyruvate + H2O. Its pathway is carbohydrate degradation; glycolysis; pyruvate from D-glyceraldehyde 3-phosphate: step 4/5. In terms of biological role, catalyzes the reversible conversion of 2-phosphoglycerate (2-PG) into phosphoenolpyruvate (PEP). It is essential for the degradation of carbohydrates via glycolysis. This Salmonella dublin (strain CT_02021853) protein is Enolase.